Reading from the N-terminus, the 545-residue chain is Chaperonin GroEL 2 (545 aa).

Residues 30 to 33, Lys-51, 87 to 91, Gly-415, and Asp-496 each bind ATP; these read TLGP and DGTTT.

It belongs to the chaperonin (HSP60) family. In terms of assembly, forms a cylinder of 14 subunits composed of two heptameric rings stacked back-to-back. Interacts with the co-chaperonin GroES.

It localises to the cytoplasm. It carries out the reaction ATP + H2O + a folded polypeptide = ADP + phosphate + an unfolded polypeptide.. Functionally, together with its co-chaperonin GroES, plays an essential role in assisting protein folding. The GroEL-GroES system forms a nano-cage that allows encapsulation of the non-native substrate proteins and provides a physical environment optimized to promote and accelerate protein folding. The sequence is that of Chaperonin GroEL 2 from Nitrobacter winogradskyi (strain ATCC 25391 / DSM 10237 / CIP 104748 / NCIMB 11846 / Nb-255).